The sequence spans 234 residues: t-SNARE protein aex-4 (234 aa).

2 consecutive t-SNARE coiled-coil homology domains span residues 37-99 and 170-232; these read AKLN…ITAM and DAIE…VKKL.

Belongs to the SNAP-25 family. In terms of tissue distribution, expressed in intestinal cells.

It is found in the cell membrane. Its function is as follows. t-SNARE protein which regulates the secretion of aex-5 from intestinal cells. Involved in the defecation motor program, which is a coordinated series of three muscle contractions that occurs every 45 seconds. The polypeptide is t-SNARE protein aex-4 (Caenorhabditis elegans).